The chain runs to 75 residues: Exodeoxyribonuclease 7 small subunit (75 aa).

This sequence belongs to the XseB family. In terms of assembly, heterooligomer composed of large and small subunits.

The protein resides in the cytoplasm. It carries out the reaction Exonucleolytic cleavage in either 5'- to 3'- or 3'- to 5'-direction to yield nucleoside 5'-phosphates.. Bidirectionally degrades single-stranded DNA into large acid-insoluble oligonucleotides, which are then degraded further into small acid-soluble oligonucleotides. This is Exodeoxyribonuclease 7 small subunit from Listeria innocua serovar 6a (strain ATCC BAA-680 / CLIP 11262).